A 129-amino-acid polypeptide reads, in one-letter code: Glycine cleavage system H protein (129 aa).

Residues 24 to 106 enclose the Lipoyl-binding domain; sequence IATIGITEFA…YGEGWFLKVR (83 aa). Lysine 65 bears the N6-lipoyllysine mark.

The protein belongs to the GcvH family. In terms of assembly, the glycine cleavage system is composed of four proteins: P, T, L and H. Requires (R)-lipoate as cofactor.

The glycine cleavage system catalyzes the degradation of glycine. The H protein shuttles the methylamine group of glycine from the P protein to the T protein. The sequence is that of Glycine cleavage system H protein from Nostoc punctiforme (strain ATCC 29133 / PCC 73102).